The following is a 1399-amino-acid chain: DNA-directed RNA polymerase subunit beta' (1399 aa).

Zn(2+) is bound by residues C70, C72, C85, and C88. Positions 460, 462, and 464 each coordinate Mg(2+). Residues C814, C888, C895, and C898 each coordinate Zn(2+).

Belongs to the RNA polymerase beta' chain family. As to quaternary structure, the RNAP catalytic core consists of 2 alpha, 1 beta, 1 beta' and 1 omega subunit. When a sigma factor is associated with the core the holoenzyme is formed, which can initiate transcription. Mg(2+) serves as cofactor. The cofactor is Zn(2+).

It catalyses the reaction RNA(n) + a ribonucleoside 5'-triphosphate = RNA(n+1) + diphosphate. Functionally, DNA-dependent RNA polymerase catalyzes the transcription of DNA into RNA using the four ribonucleoside triphosphates as substrates. The polypeptide is DNA-directed RNA polymerase subunit beta' (Pseudomonas putida (strain GB-1)).